The sequence spans 237 residues: Phosphoribosylaminoimidazole-succinocarboxamide synthase (237 aa).

It belongs to the SAICAR synthetase family.

It catalyses the reaction 5-amino-1-(5-phospho-D-ribosyl)imidazole-4-carboxylate + L-aspartate + ATP = (2S)-2-[5-amino-1-(5-phospho-beta-D-ribosyl)imidazole-4-carboxamido]succinate + ADP + phosphate + 2 H(+). It participates in purine metabolism; IMP biosynthesis via de novo pathway; 5-amino-1-(5-phospho-D-ribosyl)imidazole-4-carboxamide from 5-amino-1-(5-phospho-D-ribosyl)imidazole-4-carboxylate: step 1/2. In Enterococcus faecalis (strain ATCC 700802 / V583), this protein is Phosphoribosylaminoimidazole-succinocarboxamide synthase.